The sequence spans 333 residues: Biotin synthase (333 aa).

One can recognise a Radical SAM core domain in the interval 46-275; that stretch reads YYGKKVKLNM…TKEIRISGGR (230 aa). Cysteine 64, cysteine 68, and cysteine 71 together coordinate [4Fe-4S] cluster. [2Fe-2S] cluster-binding residues include cysteine 108, cysteine 140, cysteine 200, and arginine 270.

The protein belongs to the radical SAM superfamily. Biotin synthase family. Homodimer. Requires [4Fe-4S] cluster as cofactor. [2Fe-2S] cluster is required as a cofactor.

It carries out the reaction (4R,5S)-dethiobiotin + (sulfur carrier)-SH + 2 reduced [2Fe-2S]-[ferredoxin] + 2 S-adenosyl-L-methionine = (sulfur carrier)-H + biotin + 2 5'-deoxyadenosine + 2 L-methionine + 2 oxidized [2Fe-2S]-[ferredoxin]. Its pathway is cofactor biosynthesis; biotin biosynthesis; biotin from 7,8-diaminononanoate: step 2/2. In terms of biological role, catalyzes the conversion of dethiobiotin (DTB) to biotin by the insertion of a sulfur atom into dethiobiotin via a radical-based mechanism. This is Biotin synthase from Halalkalibacterium halodurans (strain ATCC BAA-125 / DSM 18197 / FERM 7344 / JCM 9153 / C-125) (Bacillus halodurans).